Consider the following 338-residue polypeptide: Glycerol-3-phosphate dehydrogenase [NAD(P)+] (338 aa).

NADPH contacts are provided by Ser-14, Tyr-15, His-35, and Lys-109. Sn-glycerol 3-phosphate-binding residues include Lys-109, Gly-138, and Thr-140. Ala-142 is a binding site for NADPH. 5 residues coordinate sn-glycerol 3-phosphate: Lys-194, Asp-247, Ser-257, Arg-258, and Asn-259. Catalysis depends on Lys-194, which acts as the Proton acceptor. Arg-258 contacts NADPH. NADPH is bound by residues Val-282 and Glu-284.

Belongs to the NAD-dependent glycerol-3-phosphate dehydrogenase family.

It localises to the cytoplasm. The enzyme catalyses sn-glycerol 3-phosphate + NAD(+) = dihydroxyacetone phosphate + NADH + H(+). It carries out the reaction sn-glycerol 3-phosphate + NADP(+) = dihydroxyacetone phosphate + NADPH + H(+). It participates in membrane lipid metabolism; glycerophospholipid metabolism. In terms of biological role, catalyzes the reduction of the glycolytic intermediate dihydroxyacetone phosphate (DHAP) to sn-glycerol 3-phosphate (G3P), the key precursor for phospholipid synthesis. The chain is Glycerol-3-phosphate dehydrogenase [NAD(P)+] from Shewanella baltica (strain OS185).